The primary structure comprises 149 residues: Myoglobin (149 aa).

Ala2 bears the N-acetylalanine mark. Residues 2–143 enclose the Globin domain; it reads ABWDKVNSVW…ICSDIEKEYK (142 aa). His89 is a heme b binding site.

The protein belongs to the globin family. As to quaternary structure, monomeric.

It localises to the cytoplasm. The protein localises to the sarcoplasm. The catalysed reaction is Fe(III)-heme b-[protein] + nitric oxide + H2O = Fe(II)-heme b-[protein] + nitrite + 2 H(+). The enzyme catalyses H2O2 + AH2 = A + 2 H2O. In terms of biological role, monomeric heme protein which primary function is to store oxygen and facilitate its diffusion within muscle tissues. Reversibly binds oxygen through a pentacoordinated heme iron and enables its timely and efficient release as needed during periods of heightened demand. Depending on the oxidative conditions of tissues and cells, and in addition to its ability to bind oxygen, it also has a nitrite reductase activity whereby it regulates the production of bioactive nitric oxide. Under stress conditions, like hypoxia and anoxia, it also protects cells against reactive oxygen species thanks to its pseudoperoxidase activity. The sequence is that of Myoglobin (mb) from Hemitriakis japanica (Japanese topeshark).